We begin with the raw amino-acid sequence, 89 residues long: Large ribosomal subunit protein bL27 (89 aa).

The disordered stretch occupies residues 1–20 (MAHKKAGGSSRNGRDSAGRR).

Belongs to the bacterial ribosomal protein bL27 family.

This is Large ribosomal subunit protein bL27 from Zymomonas mobilis subsp. mobilis (strain ATCC 31821 / ZM4 / CP4).